The following is a 131-amino-acid chain: D-ribose pyranase (131 aa).

The active-site Proton donor is His-20. Residues Asp-28, His-98, and 120-122 (YAN) each bind substrate.

Belongs to the RbsD / FucU family. RbsD subfamily. As to quaternary structure, homodecamer.

The protein localises to the cytoplasm. The catalysed reaction is beta-D-ribopyranose = beta-D-ribofuranose. The protein operates within carbohydrate metabolism; D-ribose degradation; D-ribose 5-phosphate from beta-D-ribopyranose: step 1/2. Functionally, catalyzes the interconversion of beta-pyran and beta-furan forms of D-ribose. This chain is D-ribose pyranase, found in Bacillus cytotoxicus (strain DSM 22905 / CIP 110041 / 391-98 / NVH 391-98).